A 333-amino-acid polypeptide reads, in one-letter code: Acetoin:2,6-dichlorophenolindophenol oxidoreductase subunit alpha (333 aa).

In terms of assembly, tetramer of 2 alpha and 2 beta subunits. The cofactor is thiamine diphosphate.

Its pathway is ketone degradation; acetoin degradation. Functionally, catalyzes the 2,6-dichlorophenolindophenol-dependent cleavage of acetoin into acetate and acetaldehyde. The alpha subunit is probably the catalytic subunit of the enzyme. The chain is Acetoin:2,6-dichlorophenolindophenol oxidoreductase subunit alpha (acoA) from Bacillus subtilis (strain 168).